Here is a 338-residue protein sequence, read N- to C-terminus: Anthranilate phosphoribosyltransferase (338 aa).

Residues Gly-81, Gly-84 to Asp-85, Thr-89, Asn-91 to Thr-94, Lys-109 to Ser-117, and Ser-121 each bind 5-phospho-alpha-D-ribose 1-diphosphate. Gly-81 lines the anthranilate pocket. Mg(2+) is bound at residue Ser-93. Asn-112 contributes to the anthranilate binding site. Arg-167 contributes to the anthranilate binding site. Mg(2+) is bound by residues Asp-226 and Glu-227.

The protein belongs to the anthranilate phosphoribosyltransferase family. In terms of assembly, homodimer. Requires Mg(2+) as cofactor.

The catalysed reaction is N-(5-phospho-beta-D-ribosyl)anthranilate + diphosphate = 5-phospho-alpha-D-ribose 1-diphosphate + anthranilate. It participates in amino-acid biosynthesis; L-tryptophan biosynthesis; L-tryptophan from chorismate: step 2/5. In terms of biological role, catalyzes the transfer of the phosphoribosyl group of 5-phosphorylribose-1-pyrophosphate (PRPP) to anthranilate to yield N-(5'-phosphoribosyl)-anthranilate (PRA). The protein is Anthranilate phosphoribosyltransferase of Alkalilimnicola ehrlichii (strain ATCC BAA-1101 / DSM 17681 / MLHE-1).